We begin with the raw amino-acid sequence, 62 residues long: Sperm histone (62 aa).

Residues 1-62 (MARYRRSRTR…GSRRRRRRRY (62 aa)) form a disordered region. Thr-9 bears the Phosphothreonine mark.

The protein belongs to the protamine P1 family. In terms of tissue distribution, testis.

The protein localises to the nucleus. The protein resides in the chromosome. Its function is as follows. Protamines substitute for histones in the chromatin of sperm during the haploid phase of spermatogenesis. They compact sperm DNA into a highly condensed, stable and inactive complex. In Gallus gallus (Chicken), this protein is Sperm histone.